The following is a 196-amino-acid chain: ATP-dependent Clp protease proteolytic subunit 1 (196 aa).

Catalysis depends on serine 96, which acts as the Nucleophile. Residue histidine 121 is part of the active site.

The protein belongs to the peptidase S14 family. Fourteen ClpP subunits assemble into 2 heptameric rings which stack back to back to give a disk-like structure with a central cavity, resembling the structure of eukaryotic proteasomes.

Its subcellular location is the cytoplasm. The enzyme catalyses Hydrolysis of proteins to small peptides in the presence of ATP and magnesium. alpha-casein is the usual test substrate. In the absence of ATP, only oligopeptides shorter than five residues are hydrolyzed (such as succinyl-Leu-Tyr-|-NHMec, and Leu-Tyr-Leu-|-Tyr-Trp, in which cleavage of the -Tyr-|-Leu- and -Tyr-|-Trp bonds also occurs).. Functionally, cleaves peptides in various proteins in a process that requires ATP hydrolysis. Has a chymotrypsin-like activity. Plays a major role in the degradation of misfolded proteins. This Prochlorococcus marinus (strain SARG / CCMP1375 / SS120) protein is ATP-dependent Clp protease proteolytic subunit 1.